The primary structure comprises 269 residues: Eukaryotic translation initiation factor 3 subunit G-1 (269 aa).

An RRM domain is found at 188–266 (AAIRISNLSE…LILSVEWSKP (79 aa)).

Belongs to the eIF-3 subunit G family. As to quaternary structure, component of the eukaryotic translation initiation factor 3 (eIF-3) complex. The eIF-3 complex interacts with pix.

The protein localises to the cytoplasm. RNA-binding component of the eukaryotic translation initiation factor 3 (eIF-3) complex, which is involved in protein synthesis of a specialized repertoire of mRNAs and, together with other initiation factors, stimulates binding of mRNA and methionyl-tRNAi to the 40S ribosome. The eIF-3 complex specifically targets and initiates translation of a subset of mRNAs involved in cell proliferation. This subunit can bind 18S rRNA. The protein is Eukaryotic translation initiation factor 3 subunit G-1 of Drosophila sechellia (Fruit fly).